A 3038-amino-acid chain; its full sequence is Lovastatin nonaketide synthase, polyketide synthase component (3038 aa).

The 440-residue stretch at 8 to 447 folds into the Ketosynthase family 3 (KS3) domain; the sequence is NEPIVVVGSG…GTNAHAIIEE (440 aa). Residues Cys-181, His-320, and His-367 each act as for beta-ketoacyl synthase activity in the active site. The tract at residues 562 to 889 is malonyl-CoA:ACP transacylase (MAT) domain; that stretch reads IFTGQGAQWP…GKNDLDTFSR (328 aa). Ser-656 functions as the For malonyltransferase activity in the catalytic mechanism. The lovC-binding stretch occupies residues 695-757; sequence AMLAAGMSFE…DESTFARLLR (63 aa). The segment at 953-1089 is N-terminal hotdog fold; it reads HLLLGKLSEY…GQLALMIGDV (137 aa). Residues 953-1263 are dehydratase (DH) domain; sequence HLLLGKLSEY…ENITFKPFSP (311 aa). A PKS/mFAS DH domain is found at 953–1267; that stretch reads HLLLGKLSEY…FKPFSPPDAS (315 aa). The active-site Proton acceptor; for dehydratase activity is His-985. Residues 1107 to 1267 form a C-terminal hotdog fold region; it reads EEHPHMNRVN…FKPFSPPDAS (161 aa). The Proton donor; for dehydratase activity role is filled by Asp-1174. The tract at residues 1443–1543 is methyltransferase (CMet) domain; sequence LEIGAGTGGA…ARSLLKPGGQ (101 aa). The tract at residues 2139–2437 is ketoreductase (KR) domain; it reads TLPTRVRSID…KIPEYRGAKA (299 aa). In terms of domain architecture, Carrier spans 2463 to 2538; the sequence is QIVIDGLSAK…DLADEAAARL (76 aa). Ser-2498 carries the O-(pantetheine 4'-phosphoryl)serine modification. The interval 2546-2602 is disordered; the sequence is VAATDGGAESTDNTSENEVSGREDTDLSAAATITEPSSADEDDTEPGDEDVPRSHHP. Acidic residues predominate over residues 2583 to 2594; the sequence is SADEDDTEPGDE. An inactive Condensation domain region spans residues 2602–2952; the sequence is PLSLGQEYSW…PTSNQPAPLL (351 aa).

Homodimer. Each MAT domain from the lovB homodimer binds one lovC molecule to form the final active lovB-lovC megasynthase complex. Requires pantetheine 4'-phosphate as cofactor.

The enzyme catalyses holo-[lovastatin nonaketide synthase] + 9 malonyl-CoA + S-adenosyl-L-methionine + 11 NADPH + 19 H(+) = dihydromonacolin L-[lovastatin nonaketide synthase] + S-adenosyl-L-homocysteine + 9 CO2 + 11 NADP(+) + 9 CoA + 6 H2O. It functions in the pathway polyketide biosynthesis; lovastatin biosynthesis. Functionally, lovastatin nonaketide synthase; part of the gene cluster that mediates the biosynthesis of lovastatin (also known as mevinolin, mevacor or monacolin K), a hypolipidemic inhibitor of (3S)-hydroxymethylglutaryl-coenzyme A (HMG-CoA) reductase (HMGR). The first step in the biosynthesis of lovastatin is the production of dihydromonacolin L acid by the lovastatin nonaketide synthase lovB and the trans-acting enoyl reductase lovC (called the lovB-lovC megasynthase complex) via condensation of one acetyl-CoA unit and 8 malonyl-CoA units. Dihydromonacolin L acid is released from lovB by the thioesterase lovG. Next, dihydromonacolin L acid is oxidized by the dihydromonacolin L monooxygenase lovA twice to form monacolin J acid. The 2-methylbutyrate moiety of lovastatin is synthesized by the lovastatin diketide synthase lovF via condensation of one acetyl-CoA unit and one malonyl-CoA unit. Finally, the covalent attachment of this moiety to monacolin J acid is catalyzed by the transesterase lovD to yield lovastatin. LovD has broad substrate specificity and can also convert monacolin J to simvastatin using alpha-dimethylbutanoyl-S-methyl-3-mercaptopropionate (DMB-S-MMP) as the thioester acyl donor, and can also catalyze the reverse reaction and function as hydrolase in vitro. LovD has much higher activity with LovF-bound 2-methylbutanoate than with free diketide substrates. In Aspergillus terreus (strain NIH 2624 / FGSC A1156), this protein is Lovastatin nonaketide synthase, polyketide synthase component (lovB).